Here is a 70-residue protein sequence, read N- to C-terminus: UPF0426 protein ssl0294 (70 aa).

This sequence belongs to the UPF0426 family.

The polypeptide is UPF0426 protein ssl0294 (Synechocystis sp. (strain ATCC 27184 / PCC 6803 / Kazusa)).